Reading from the N-terminus, the 308-residue chain is Acetyl-coenzyme A carboxylase carboxyl transferase subunit beta 1 (308 aa).

Positions 25–294 constitute a CoA carboxyltransferase N-terminal domain; that stretch reads VWTKCTSCEQ…PLVVSVNESP (270 aa). Cys29, Cys32, Cys48, and Cys51 together coordinate Zn(2+). A C4-type zinc finger spans residues 29–51; sequence CTSCEQVLYHAELERNLEVCPKC. Residues 288–308 form a disordered region; it reads VSVNESPNEEPYSVPEVDEKG.

Belongs to the AccD/PCCB family. As to quaternary structure, acetyl-CoA carboxylase is a heterohexamer composed of biotin carboxyl carrier protein (AccB), biotin carboxylase (AccC) and two subunits each of ACCase subunit alpha (AccA) and ACCase subunit beta (AccD). Zn(2+) serves as cofactor.

Its subcellular location is the cytoplasm. It carries out the reaction N(6)-carboxybiotinyl-L-lysyl-[protein] + acetyl-CoA = N(6)-biotinyl-L-lysyl-[protein] + malonyl-CoA. Its pathway is lipid metabolism; malonyl-CoA biosynthesis; malonyl-CoA from acetyl-CoA: step 1/1. Its function is as follows. Component of the acetyl coenzyme A carboxylase (ACC) complex. Biotin carboxylase (BC) catalyzes the carboxylation of biotin on its carrier protein (BCCP) and then the CO(2) group is transferred by the transcarboxylase to acetyl-CoA to form malonyl-CoA. This is Acetyl-coenzyme A carboxylase carboxyl transferase subunit beta 1 from Vibrio parahaemolyticus serotype O3:K6 (strain RIMD 2210633).